Reading from the N-terminus, the 421-residue chain is uncharacterized protein (421 aa).

This is an uncharacterized protein from Bacillus subtilis (strain 168).